Consider the following 234-residue polypeptide: Glucosamine-6-phosphate deaminase (234 aa).

The active-site Proton acceptor; for enolization step is aspartate 62. Catalysis depends on asparagine 128, which acts as the For ring-opening step. Histidine 130 (proton acceptor; for ring-opening step) is an active-site residue. The active-site For ring-opening step is glutamate 135.

It belongs to the glucosamine/galactosamine-6-phosphate isomerase family. NagB subfamily.

The enzyme catalyses alpha-D-glucosamine 6-phosphate + H2O = beta-D-fructose 6-phosphate + NH4(+). It functions in the pathway amino-sugar metabolism; N-acetylneuraminate degradation; D-fructose 6-phosphate from N-acetylneuraminate: step 5/5. In terms of biological role, catalyzes the reversible isomerization-deamination of glucosamine 6-phosphate (GlcN6P) to form fructose 6-phosphate (Fru6P) and ammonium ion. The protein is Glucosamine-6-phosphate deaminase of Streptococcus pyogenes serotype M49 (strain NZ131).